We begin with the raw amino-acid sequence, 261 residues long: Ribonuclease HII (261 aa).

The RNase H type-2 domain maps to 72–260 (AVICGIDEVG…IKSIVLEKLD (189 aa)). 3 residues coordinate a divalent metal cation: Asp78, Glu79, and Asp170.

Belongs to the RNase HII family. Mn(2+) serves as cofactor. The cofactor is Mg(2+).

Its subcellular location is the cytoplasm. The enzyme catalyses Endonucleolytic cleavage to 5'-phosphomonoester.. Its function is as follows. Endonuclease that specifically degrades the RNA of RNA-DNA hybrids. This Staphylococcus carnosus (strain TM300) protein is Ribonuclease HII.